The primary structure comprises 40 residues: Photosystem II reaction center protein J (40 aa).

The chain crosses the membrane as a helical span at residues 8–28; the sequence is IPLWIIGTVAGILVIGLIGIF.

This sequence belongs to the PsbJ family. PSII is composed of 1 copy each of membrane proteins PsbA, PsbB, PsbC, PsbD, PsbE, PsbF, PsbH, PsbI, PsbJ, PsbK, PsbL, PsbM, PsbT, PsbX, PsbY, PsbZ, Psb30/Ycf12, at least 3 peripheral proteins of the oxygen-evolving complex and a large number of cofactors. It forms dimeric complexes.

Its subcellular location is the plastid. The protein localises to the chloroplast thylakoid membrane. One of the components of the core complex of photosystem II (PSII). PSII is a light-driven water:plastoquinone oxidoreductase that uses light energy to abstract electrons from H(2)O, generating O(2) and a proton gradient subsequently used for ATP formation. It consists of a core antenna complex that captures photons, and an electron transfer chain that converts photonic excitation into a charge separation. This Oenothera elata subsp. hookeri (Hooker's evening primrose) protein is Photosystem II reaction center protein J.